Consider the following 275-residue polypeptide: NH(3)-dependent NAD(+) synthetase (275 aa).

46-53 contacts ATP; that stretch reads GISGGQDS. Residue Asp52 participates in Mg(2+) binding. Residue Arg140 coordinates deamido-NAD(+). ATP is bound at residue Thr160. Glu165 is a binding site for Mg(2+). Residues Lys173 and Asp180 each contribute to the deamido-NAD(+) site. Residues Lys189 and Thr211 each contribute to the ATP site. 260–261 contacts deamido-NAD(+); the sequence is HK.

This sequence belongs to the NAD synthetase family. As to quaternary structure, homodimer.

It carries out the reaction deamido-NAD(+) + NH4(+) + ATP = AMP + diphosphate + NAD(+) + H(+). Its pathway is cofactor biosynthesis; NAD(+) biosynthesis; NAD(+) from deamido-NAD(+) (ammonia route): step 1/1. Catalyzes the ATP-dependent amidation of deamido-NAD to form NAD. Uses ammonia as a nitrogen source. In Salmonella agona (strain SL483), this protein is NH(3)-dependent NAD(+) synthetase.